The primary structure comprises 333 residues: Probable cytosolic iron-sulfur protein assembly protein ciao1-B (333 aa).

7 WD repeats span residues 14-53 (HPDSRCWYVAWNPKGTLLASCGGDRTIRIWGREGDSWECK), 59-98 (GHQRTVRKVAWSPCGNYLASASFDATTCIWKKKNDDFECL), 103-142 (GHENEVKCVAWAPSGNLLATCSRDKSVWIWEVDEENEYEC), 148-187 (SHTQDVKHVVWHPTQELLASCSYDNNVCVYKEEDDDWECR), 192-231 (GHTSTVWGLTFDPSGQRLASCSDDCTVKIWKECQPEGGQE), 246-285 (FHGRTVYDIAWCPLTGALATACGDDGVRVFKEDETADPDQ), and 297-333 (AHTQDVNCIAWHPKEAGLLVSCSDNGEIAVWNYQSGV).

The protein belongs to the WD repeat CIA1 family. As to quaternary structure, component of the CIA complex.

In terms of biological role, key component of the cytosolic iron-sulfur protein assembly (CIA) complex, a multiprotein complex that mediates the incorporation of iron-sulfur cluster into extramitochondrial Fe/S proteins. This is Probable cytosolic iron-sulfur protein assembly protein ciao1-B (ciao1b) from Salmo salar (Atlantic salmon).